Here is a 452-residue protein sequence, read N- to C-terminus: Maltoporin (452 aa).

A signal peptide spans 1 to 25; that stretch reads MMITLRKLPLAVAVAAGVMSAQAMA.

The protein belongs to the porin LamB (TC 1.B.3) family. Homotrimer formed of three 18-stranded antiparallel beta-barrels, containing three independent channels.

The protein localises to the cell outer membrane. It carries out the reaction beta-maltose(in) = beta-maltose(out). In terms of biological role, involved in the transport of maltose and maltodextrins. The sequence is that of Maltoporin from Salmonella enteritidis PT4 (strain P125109).